The chain runs to 683 residues: Glucosylceramidase (683 aa).

Glu254 (proton donor) is an active-site residue. The active-site Nucleophile is the Glu483.

This sequence belongs to the glycosyl hydrolase 5 (cellulase A) family.

Its subcellular location is the membrane. The enzyme catalyses a beta-D-glucosyl-(1&lt;-&gt;1')-N-acylsphing-4-enine + H2O = an N-acylsphing-4-enine + D-glucose. With respect to regulation, inhibited by metal cations Co(2+), Cu(2+), Ni(2+), Pb(2+) and Zn(2+). Not inhibited by metal chelator ethylenediaminetetraacetic acid (EDTA). Specifically hydrolyzes the glucosidic linkage in glucosylceramide. May prevent accumulation of aberrent glucosylceramide containing immature ceramide. This is Glucosylceramidase from Rhizopus delemar (strain RA 99-880 / ATCC MYA-4621 / FGSC 9543 / NRRL 43880) (Mucormycosis agent).